Reading from the N-terminus, the 145-residue chain is D-aminoacyl-tRNA deacylase (145 aa).

The short motif at 137–138 is the Gly-cisPro motif, important for rejection of L-amino acids element; that stretch reads GP.

Belongs to the DTD family. Homodimer.

It is found in the cytoplasm. It catalyses the reaction glycyl-tRNA(Ala) + H2O = tRNA(Ala) + glycine + H(+). The catalysed reaction is a D-aminoacyl-tRNA + H2O = a tRNA + a D-alpha-amino acid + H(+). Its function is as follows. An aminoacyl-tRNA editing enzyme that deacylates mischarged D-aminoacyl-tRNAs. Also deacylates mischarged glycyl-tRNA(Ala), protecting cells against glycine mischarging by AlaRS. Acts via tRNA-based rather than protein-based catalysis; rejects L-amino acids rather than detecting D-amino acids in the active site. By recycling D-aminoacyl-tRNA to D-amino acids and free tRNA molecules, this enzyme counteracts the toxicity associated with the formation of D-aminoacyl-tRNA entities in vivo and helps enforce protein L-homochirality. The polypeptide is D-aminoacyl-tRNA deacylase (Exiguobacterium sibiricum (strain DSM 17290 / CCUG 55495 / CIP 109462 / JCM 13490 / 255-15)).